The chain runs to 211 residues: Thymidylate kinase (211 aa).

11–18 provides a ligand contact to ATP; that stretch reads GPDGAGKT.

Belongs to the thymidylate kinase family.

The catalysed reaction is dTMP + ATP = dTDP + ADP. Functionally, phosphorylation of dTMP to form dTDP in both de novo and salvage pathways of dTTP synthesis. The protein is Thymidylate kinase of Streptococcus pyogenes serotype M18 (strain MGAS8232).